The sequence spans 90 residues: Small ribosomal subunit protein uS15c (90 aa).

It belongs to the universal ribosomal protein uS15 family. Part of the 30S ribosomal subunit.

Its subcellular location is the plastid. The protein resides in the chloroplast. In Secale cereale (Rye), this protein is Small ribosomal subunit protein uS15c (rps15).